We begin with the raw amino-acid sequence, 472 residues long: Coenzyme F(430) synthetase (472 aa).

Residue 119–125 (GVKAKTS) participates in ATP binding.

It belongs to the MurCDEF family.

It catalyses the reaction 15,17(3)-seco-F430-17(3)-acid + ATP = coenzyme F430 + ADP + phosphate. Functionally, involved in the biosynthesis of the unique nickel-containing tetrapyrrole coenzyme F430, the prosthetic group of methyl-coenzyme M reductase (MCR), which plays a key role in methanogenesis and anaerobic methane oxidation. Catalyzes the activation the g-propionate side chain of 15,17(3)-seco-F430-17(3)-acid (seco-F430) for intramolecular C-C bond formation to yield the carbocyclic F ring of coenzyme F430. The polypeptide is Coenzyme F(430) synthetase (Methanosarcina acetivorans (strain ATCC 35395 / DSM 2834 / JCM 12185 / C2A)).